The sequence spans 105 residues: Met repressor (105 aa).

Belongs to the MetJ family. In terms of assembly, homodimer.

The protein localises to the cytoplasm. This regulatory protein, when combined with SAM (S-adenosylmethionine) represses the expression of the methionine regulon and of enzymes involved in SAM synthesis. In Vibrio vulnificus (strain CMCP6), this protein is Met repressor.